We begin with the raw amino-acid sequence, 549 residues long: Tight junction-associated protein 1 (549 aa).

Residues 1 to 34 form a disordered region; sequence MSSAAPAKKPYRKAPPEHRELRLEIPVSRLEQEE. Positions 14–23 are enriched in basic and acidic residues; the sequence is APPEHRELRL. Residues 42–171 are a coiled coil; it reads MKLLQQENEE…EELNERYRLD (130 aa). Disordered regions lie at residues 207–226 and 266–322; these read RSGQ…LSPG and VDMS…PLYP. The residue at position 295 (S295) is a Phosphoserine. A compositionally biased stretch (pro residues) spans 311–320; that stretch reads YPTPSPPHPL. T313 carries the phosphothreonine modification. A phosphoserine mark is found at S315 and S340. 3 disordered regions span residues 359–404, 410–429, and 434–549; these read EDGS…SEED, QRAF…RTAF, and LPEL…TVLS. Residues 369 to 383 are compositionally biased toward polar residues; sequence SVPSSPASAQGSPHH. Low complexity predominate over residues 389 to 400; sequence PSALSAPASSAS. T417 is modified (phosphothreonine). S483 carries the post-translational modification Phosphoserine. The segment covering 485-498 has biased composition (basic and acidic residues); it reads EEERQSLLPDKEGT. Residues 522 to 534 show a composition bias toward basic residues; it reads RSPKRMGVHHLHR. A Phosphoserine modification is found at S537. The segment covering 538-549 has biased composition (polar residues); sequence LTQAQEQGTVLS.

Interacts with DLG1. Interacts with ARF6 (GTP-bound form). As to expression, widely expressed including in adult thymus, heart, lung, liver, small intestine, kidney, spleen, testis and skeletal muscle and in embryonic brain but not detected in adult brain (at protein level).

The protein resides in the golgi apparatus. It is found in the trans-Golgi network. The protein localises to the cell junction. It localises to the tight junction. Its subcellular location is the cell membrane. Plays a role in regulating the structure of the Golgi apparatus. The polypeptide is Tight junction-associated protein 1 (Mus musculus (Mouse)).